Consider the following 121-residue polypeptide: Large ribosomal subunit protein uL24 (121 aa).

The protein belongs to the universal ribosomal protein uL24 family. In terms of assembly, part of the 50S ribosomal subunit.

In terms of biological role, one of two assembly initiator proteins, it binds directly to the 5'-end of the 23S rRNA, where it nucleates assembly of the 50S subunit. Located at the polypeptide exit tunnel on the outside of the subunit. The sequence is that of Large ribosomal subunit protein uL24 from Thermococcus kodakarensis (strain ATCC BAA-918 / JCM 12380 / KOD1) (Pyrococcus kodakaraensis (strain KOD1)).